The chain runs to 236 residues: Alpha-acetolactate decarboxylase (236 aa).

The protein belongs to the alpha-acetolactate decarboxylase family.

It catalyses the reaction (2S)-2-acetolactate + H(+) = (R)-acetoin + CO2. Its pathway is polyol metabolism; (R,R)-butane-2,3-diol biosynthesis; (R,R)-butane-2,3-diol from pyruvate: step 2/3. Converts acetolactate into acetoin. The chain is Alpha-acetolactate decarboxylase (aldB) from Lactococcus lactis subsp. lactis (strain IL1403) (Streptococcus lactis).